The sequence spans 555 residues: uncharacterized protein (555 aa).

The N-terminal stretch at 1–28 (MRSGLFGVLRWTAVGLVATLVASLALTA) is a signal peptide. A lipid anchor (N-palmitoyl cysteine) is attached at Cys29. A lipid anchor (S-diacylglycerol cysteine) is attached at Cys29.

This sequence to M.tuberculosis Rv2585c and M.bovis Mb2616c.

It localises to the cell membrane. This is an uncharacterized protein from Mycobacterium leprae (strain TN).